The chain runs to 90 residues: Small ribosomal subunit protein uS19 (90 aa).

It belongs to the universal ribosomal protein uS19 family.

Functionally, protein S19 forms a complex with S13 that binds strongly to the 16S ribosomal RNA. This chain is Small ribosomal subunit protein uS19, found in Nitrosococcus oceani (strain ATCC 19707 / BCRC 17464 / JCM 30415 / NCIMB 11848 / C-107).